Consider the following 143-residue polypeptide: Anti-sigma F factor (143 aa).

The protein belongs to the anti-sigma-factor family.

The catalysed reaction is L-seryl-[protein] + ATP = O-phospho-L-seryl-[protein] + ADP + H(+). It catalyses the reaction L-threonyl-[protein] + ATP = O-phospho-L-threonyl-[protein] + ADP + H(+). In terms of biological role, binds to sigma F and blocks its ability to form an RNA polymerase holoenzyme (E-sigma F). Phosphorylates SpoIIAA on a serine residue. This phosphorylation may enable SpoIIAA to act as an anti-anti-sigma factor that counteracts SpoIIAB and thus releases sigma F from inhibition. This Clostridium botulinum (strain Eklund 17B / Type B) protein is Anti-sigma F factor.